The following is a 538-amino-acid chain: Putative outer membrane porin BglH (538 aa).

The signal sequence occupies residues 1 to 25 (MFRQNLITSAILLMAPLAFSAQSLA). Residues 52–82 (KDEEKKKYTPATVNRSVSTNDQGYAANPFPT) form a disordered region. The span at 62 to 73 (ATVNRSVSTNDQ) shows a compositional bias: polar residues.

This sequence belongs to the porin LamB (TC 1.B.3) family.

The protein localises to the cell outer membrane. In terms of biological role, may be a sugar porin with a broad carbohydrate specificity. The polypeptide is Putative outer membrane porin BglH (bglH) (Shigella flexneri).